A 115-amino-acid chain; its full sequence is Thioredoxin-1 (115 aa).

Residues 2 to 114 (LKRCNFKNQV…RQKVLEHVSA (113 aa)) form the Thioredoxin domain. Residues cysteine 39 and cysteine 42 each act as nucleophile in the active site. Residues cysteine 39 and cysteine 42 are joined by a disulfide bond.

It belongs to the thioredoxin family. Expressed in ASJ and ASI ciliated sensory neurons. Expressed in the intestine (at protein level).

Its function is as follows. Participates in various redox reactions through the reversible oxidation of its active center dithiol to a disulfide and catalyzes dithiol-disulfide exchange reactions. Shown to facilitate the reduction of insulin disulfide bonds. Might play a role in the reversible nitrosylation of cysteine residues in target proteins, and thereby contributing to the response to intracellular nitric oxide. Shapes the ASJ sensory neuron biphasic response to nitric oxide (NO) exposure; trans-nitrosylation activity might inhibit calcium flux to the cytoplasm in ASJ neurons when exposed to a NO stimulus, whereas de-nitrosylation activity might promote calcium flux when NO is diminished. By regulating the NO-induced ASJ sensory neuron activity, mediates the avoidance response to NO-producing organisms like P.aeruginosa. Positively regulates life span extension under normal and caloric restriction conditions, dauer formation and the oxidative stress response. Contributes to the down-regulation of expression of the insulin-like neuropeptide daf-28 in the ASJ neurons in a redox-independent fashion, thereby promoting dauer formation. Negatively regulates the nuclear localization of the intestinal skn-1 transcription factor in a p38 MAPK pathway-dependent and redox-independent fashion. This chain is Thioredoxin-1 (trx-1), found in Caenorhabditis elegans.